The sequence spans 311 residues: Ribosomal RNA small subunit methyltransferase H (311 aa).

S-adenosyl-L-methionine contacts are provided by residues 32–34 (AGH), D52, F79, D100, and Q107. The interval 287–311 (TASQEELEENNRARSAKLRIAEKRK) is disordered. Residues 300–311 (RSAKLRIAEKRK) are compositionally biased toward basic residues.

Belongs to the methyltransferase superfamily. RsmH family.

It localises to the cytoplasm. The enzyme catalyses cytidine(1402) in 16S rRNA + S-adenosyl-L-methionine = N(4)-methylcytidine(1402) in 16S rRNA + S-adenosyl-L-homocysteine + H(+). Specifically methylates the N4 position of cytidine in position 1402 (C1402) of 16S rRNA. The polypeptide is Ribosomal RNA small subunit methyltransferase H (Bacillus subtilis (strain 168)).